The sequence spans 343 residues: D-alanine--D-alanine ligase (343 aa).

Residues 132–337 form the ATP-grasp domain; sequence KNLFSYHKIP…YPDLIDKLIE (206 aa). 165 to 220 is an ATP binding site; sequence DRFLGWPCFVKPANMGSSIGVSKVHSPGEVKKALEKGFYYDRKLIFEEFVEGREIE. 3 residues coordinate Mg(2+): D291, E304, and N306.

The protein belongs to the D-alanine--D-alanine ligase family. Requires Mg(2+) as cofactor. It depends on Mn(2+) as a cofactor.

The protein resides in the cytoplasm. It catalyses the reaction 2 D-alanine + ATP = D-alanyl-D-alanine + ADP + phosphate + H(+). It functions in the pathway cell wall biogenesis; peptidoglycan biosynthesis. Its function is as follows. Cell wall formation. This Halothermothrix orenii (strain H 168 / OCM 544 / DSM 9562) protein is D-alanine--D-alanine ligase.